The chain runs to 606 residues: Chaperone protein DnaK (606 aa).

Threonine 174 bears the Phosphothreonine; by autocatalysis mark. The span at 579-593 (ASAAGNPGQGQTNEN) shows a compositional bias: polar residues. The interval 579-606 (ASAAGNPGQGQTNENPGGKTIDGDYKVN) is disordered.

This sequence belongs to the heat shock protein 70 family.

Its function is as follows. Acts as a chaperone. The protein is Chaperone protein DnaK of Dictyoglomus thermophilum (strain ATCC 35947 / DSM 3960 / H-6-12).